A 121-amino-acid chain; its full sequence is uncharacterized protein (121 aa).

The helical transmembrane segment at 6–26 threads the bilayer; the sequence is ITTASILLVVIVAFCAAAPMI.

It localises to the membrane. This is an uncharacterized protein from Caenorhabditis elegans.